A 148-amino-acid chain; its full sequence is 3-dehydroquinate dehydratase (148 aa).

The active-site Proton acceptor is Y23. The substrate site is built by N75, H81, and D88. The active-site Proton donor is H101. Residues 102-103 (LS) and R112 each bind substrate.

It belongs to the type-II 3-dehydroquinase family. Homododecamer.

The enzyme catalyses 3-dehydroquinate = 3-dehydroshikimate + H2O. It participates in metabolic intermediate biosynthesis; chorismate biosynthesis; chorismate from D-erythrose 4-phosphate and phosphoenolpyruvate: step 3/7. In terms of biological role, catalyzes a trans-dehydration via an enolate intermediate. The polypeptide is 3-dehydroquinate dehydratase (Xylella fastidiosa (strain M23)).